The chain runs to 69 residues: Conotoxin Lt5.10 (69 aa).

The signal sequence occupies residues 1 to 19 (MLCLPVFIILLLLASPAAP). A propeptide spanning residues 20-54 (KSLETRIQNDLIRAGLTDADLKTEKGFLSGLLNVA) is cleaved from the precursor.

This sequence belongs to the conotoxin T superfamily. Contains 2 disulfide bonds that can be either 'C1-C3, C2-C4' or 'C1-C4, C2-C3', since these disulfide connectivities have been observed for conotoxins with cysteine framework V (for examples, see AC P0DQQ7 and AC P81755). As to expression, expressed by the venom duct.

Its subcellular location is the secreted. This is Conotoxin Lt5.10 from Conus litteratus (Lettered cone).